The primary structure comprises 399 residues: Na(+)/H(+) antiporter NhaA (399 aa).

11 helical membrane-spanning segments follow: residues 14–34 (AGGI…NSPL), 59–79 (LIHW…GLEV), 95–115 (SLPT…YLLF), 124–144 (AGWA…MALL), 154–174 (VFLL…IAMF), 177–197 (TDLS…LVGL), 213–233 (LILW…GVII), 261–281 (FIIL…PMSF), 290–310 (VGIA…FSYI), 331–351 (VALM…LAFV), and 363–383 (LGIL…LAKV).

It belongs to the NhaA Na(+)/H(+) (TC 2.A.33) antiporter family.

The protein resides in the cell inner membrane. It carries out the reaction Na(+)(in) + 2 H(+)(out) = Na(+)(out) + 2 H(+)(in). In terms of biological role, na(+)/H(+) antiporter that extrudes sodium in exchange for external protons. This is Na(+)/H(+) antiporter NhaA from Shewanella sediminis (strain HAW-EB3).